The chain runs to 238 residues: Ribonuclease PH (238 aa).

Phosphate contacts are provided by residues Arg86 and 124–126 (GTR).

This sequence belongs to the RNase PH family. In terms of assembly, homohexameric ring arranged as a trimer of dimers.

The enzyme catalyses tRNA(n+1) + phosphate = tRNA(n) + a ribonucleoside 5'-diphosphate. Phosphorolytic 3'-5' exoribonuclease that plays an important role in tRNA 3'-end maturation. Removes nucleotide residues following the 3'-CCA terminus of tRNAs; can also add nucleotides to the ends of RNA molecules by using nucleoside diphosphates as substrates, but this may not be physiologically important. Probably plays a role in initiation of 16S rRNA degradation (leading to ribosome degradation) during starvation. In Geotalea daltonii (strain DSM 22248 / JCM 15807 / FRC-32) (Geobacter daltonii), this protein is Ribonuclease PH.